A 193-amino-acid chain; its full sequence is NADH-quinone oxidoreductase subunit B (193 aa).

Residues C72, C73, C137, and C167 each coordinate [4Fe-4S] cluster.

It belongs to the complex I 20 kDa subunit family. As to quaternary structure, NDH-1 is composed of 14 different subunits. Subunits NuoB, C, D, E, F, and G constitute the peripheral sector of the complex. The cofactor is [4Fe-4S] cluster.

The protein resides in the cell inner membrane. The enzyme catalyses a quinone + NADH + 5 H(+)(in) = a quinol + NAD(+) + 4 H(+)(out). NDH-1 shuttles electrons from NADH, via FMN and iron-sulfur (Fe-S) centers, to quinones in the respiratory chain. Couples the redox reaction to proton translocation (for every two electrons transferred, four hydrogen ions are translocated across the cytoplasmic membrane), and thus conserves the redox energy in a proton gradient. This is NADH-quinone oxidoreductase subunit B from Brucella abortus (strain S19).